A 130-amino-acid polypeptide reads, in one-letter code: Glycine cleavage system H protein (130 aa).

The Lipoyl-binding domain maps to 23 to 105 (IGIIGITDFA…YGKGWMIKVE (83 aa)). Lys64 is subject to N6-lipoyllysine.

It belongs to the GcvH family. As to quaternary structure, the glycine cleavage system is composed of four proteins: P, T, L and H. (R)-lipoate is required as a cofactor.

In terms of biological role, the glycine cleavage system catalyzes the degradation of glycine. The H protein shuttles the methylamine group of glycine from the P protein to the T protein. The protein is Glycine cleavage system H protein of Carboxydothermus hydrogenoformans (strain ATCC BAA-161 / DSM 6008 / Z-2901).